The following is a 638-amino-acid chain: Threonine--tRNA ligase (638 aa).

The TGS domain maps to 1-61; that stretch reads MPKITLPDGT…KNDSKVVIIT (61 aa). The interval 242–533 is catalytic; the sequence is DHRKLGKKHS…LIEQYEAKFP (292 aa). Positions 333, 384, and 510 each coordinate Zn(2+).

Belongs to the class-II aminoacyl-tRNA synthetase family. Homodimer. The cofactor is Zn(2+).

It localises to the cytoplasm. The catalysed reaction is tRNA(Thr) + L-threonine + ATP = L-threonyl-tRNA(Thr) + AMP + diphosphate + H(+). Catalyzes the attachment of threonine to tRNA(Thr) in a two-step reaction: L-threonine is first activated by ATP to form Thr-AMP and then transferred to the acceptor end of tRNA(Thr). Also edits incorrectly charged L-seryl-tRNA(Thr). This Prochlorococcus marinus (strain MIT 9515) protein is Threonine--tRNA ligase.